The chain runs to 440 residues: UDP-N-acetylglucosamine 1-carboxyvinyltransferase (440 aa).

22–23 (KN) serves as a coordination point for phosphoenolpyruvate. A UDP-N-acetyl-alpha-D-glucosamine-binding site is contributed by arginine 102. Residue cysteine 126 is the Proton donor of the active site. The residue at position 126 (cysteine 126) is a 2-(S-cysteinyl)pyruvic acid O-phosphothioketal. UDP-N-acetyl-alpha-D-glucosamine-binding positions include 131–135 (RPVDQ), aspartate 320, and isoleucine 342.

The protein belongs to the EPSP synthase family. MurA subfamily.

The protein localises to the cytoplasm. The enzyme catalyses phosphoenolpyruvate + UDP-N-acetyl-alpha-D-glucosamine = UDP-N-acetyl-3-O-(1-carboxyvinyl)-alpha-D-glucosamine + phosphate. Its pathway is cell wall biogenesis; peptidoglycan biosynthesis. Its function is as follows. Cell wall formation. Adds enolpyruvyl to UDP-N-acetylglucosamine. This chain is UDP-N-acetylglucosamine 1-carboxyvinyltransferase, found in Acidovorax ebreus (strain TPSY) (Diaphorobacter sp. (strain TPSY)).